The primary structure comprises 107 residues: Phosphoribosyl-ATP pyrophosphatase (107 aa).

It belongs to the PRA-PH family.

It is found in the cytoplasm. The catalysed reaction is 1-(5-phospho-beta-D-ribosyl)-ATP + H2O = 1-(5-phospho-beta-D-ribosyl)-5'-AMP + diphosphate + H(+). It functions in the pathway amino-acid biosynthesis; L-histidine biosynthesis; L-histidine from 5-phospho-alpha-D-ribose 1-diphosphate: step 2/9. In Sinorhizobium medicae (strain WSM419) (Ensifer medicae), this protein is Phosphoribosyl-ATP pyrophosphatase.